Reading from the N-terminus, the 290-residue chain is Coiled-coil domain-containing protein 137 (290 aa).

Disordered regions lie at residues 1-92 (MARP…EAQV), 98-117 (LEKEAKGEEPDIAVPKFKQR), 139-181 (LSKN…EARA), and 269-290 (RQEMTPAQPPGSSFQRQGHACL). The segment covering 20–39 (SGQPQGRRQQQAQGQQRSAS) has biased composition (low complexity). Basic and acidic residues predominate over residues 56–79 (KNQDEQEIPFRLREIMRSRQEMKK). A coiled-coil region spans residues 66 to 89 (RLREIMRSRQEMKKTLSNKKRKKE). Basic and acidic residues predominate over residues 154–163 (PKKEKSERKK). Residues 155–192 (KKEKSERKKAFQKRRLEKAQRKREARAVDRLEQELLKD) adopt a coiled-coil conformation. A compositionally biased stretch (basic residues) spans 164–178 (AFQKRRLEKAQRKRE).

The protein localises to the chromosome. In Mus musculus (Mouse), this protein is Coiled-coil domain-containing protein 137 (Ccdc137).